Consider the following 195-residue polypeptide: Calcineurin B homologous protein 1 (195 aa).

Gly2 is lipidated: N-myristoyl glycine. The Necessary for association with microtubule and interaction with GAPDH signature appears at 2-6 (GSRAS). 4 EF-hand domains span residues 26-61 (SQITRLYSRFTSLDKGENGTLSREDFQRIPELAINP), 71-106 (FSEGEDQVNFRGFMRTLAHFRPIEDNEKSKDVNGPE), 110-145 (SRSNKLHFAFRLYDLDKDDKISRDELLQVLRMMVGV), and 151-186 (QLGSIADRTIQEADQDGDSAISFTEFVKVLEKVDVE). Asp123, Asp125, Asp127, Lys129, and Glu134 together coordinate Ca(2+). A Nuclear export signal 1 motif is present at residues 138-147 (VLRMMVGVNI). 4 residues coordinate Ca(2+): Asp164, Asp166, Asp168, and Glu175. A Nuclear export signal 2 motif is present at residues 176-185 (FVKVLEKVDV).

The protein belongs to the calcineurin regulatory subunit family. CHP subfamily. As to quaternary structure, monomer. Interacts with STK17B; the interaction occurs in a calcium-independent manner and induces the translocation of CHP1 from the Golgi to the nucleus. Interacts with GAPDH; the interaction is direct, occurs in a N-myristoylation-dependent manner and facilitates the ability of CHP1 to bind microtubules. Interacts with KIF1B (via the C-terminal end of the kinesin-motor domain); the interaction occurs in a calcium-dependent manner. Associates (via C-terminal domain) with microtubules; the association occurs with polymerized microtubules during the cell cycle in a myristoylation- and calcium-independent manner and is enhanced by GAPDH. Interacts with PPP3CA. Interacts with SLC9A1/NHE1 (via the cytoplasmic C-terminal domain); the interaction occurs at the plasma membrane in a calcium-dependent manner and at a domain that is critical for growth factor stimulation of the exchanger. Interacts with SLC9A3; increases SLC9A3 trafficking and activity at the plasma membrane. Post-translationally, phosphorylated; decreased phosphorylation is associated with an increase in SLC9A1/NHE1 Na(+)/H(+) exchange activity. Phosphorylation occurs in serum-dependent manner. The phosphorylation state may regulate the binding to SLC9A1/NHE1. In terms of processing, both N-myristoylation and calcium-mediated conformational changes are essential for its function in exocytic traffic. N-myristoylation is required for its association with microtubules and interaction with GAPDH, but not for the constitutive association to membranes.

It localises to the nucleus. Its subcellular location is the cytoplasm. The protein resides in the cytoskeleton. It is found in the endomembrane system. The protein localises to the endoplasmic reticulum-Golgi intermediate compartment. It localises to the endoplasmic reticulum. Its subcellular location is the cell membrane. The protein resides in the membrane. Calcium-binding protein involved in different processes such as regulation of vesicular trafficking, plasma membrane Na(+)/H(+) exchanger and gene transcription. Involved in the constitutive exocytic membrane traffic. Mediates the association between microtubules and membrane-bound organelles of the endoplasmic reticulum and Golgi apparatus and is also required for the targeting and fusion of transcytotic vesicles (TCV) with the plasma membrane. Functions as an integral cofactor in cell pH regulation by controlling plasma membrane-type Na(+)/H(+) exchange activity. Affects the pH sensitivity of SLC9A1/NHE1 by increasing its sensitivity at acidic pH. Required for the stabilization and localization of SLC9A1/NHE1 at the plasma membranes. Inhibits serum- and GTPase-stimulated Na(+)/H(+) exchange. Plays a role as an inhibitor of ribosomal RNA transcription by repressing the nucleolar UBF1 transcriptional activity. May sequester UBF1 in the nucleoplasm and limit its translocation to the nucleolus. Associates to the ribosomal gene promoter. Acts as a negative regulator of the calcineurin/NFAT signaling pathway. Inhibits NFAT nuclear translocation and transcriptional activity by suppressing the calcium-dependent calcineurin phosphatase activity. Also negatively regulates the kinase activity of the apoptosis-induced kinase STK17B. Inhibits both STK17B auto- and substrate-phosphorylations in a calcium-dependent manner. This Mus musculus (Mouse) protein is Calcineurin B homologous protein 1 (Chp1).